The primary structure comprises 159 residues: MDAIATIVELVREVVEPVIEAPFELVDIEYGKIGSDMILSIFVDKPEGITLNDTADLTEIISPVLDTIKPDPFPEQYFLEITSPGLERPLKTKDAVAGAVGKYIHVGLYQAIDKQKVFEGTLLAFEEDELTMEYMDKTRKKTVRIPYSLVSKARLAVKL.

This sequence belongs to the RimP family.

Its subcellular location is the cytoplasm. Functionally, required for maturation of 30S ribosomal subunits. This is Ribosome maturation factor RimP from Streptococcus pneumoniae serotype 2 (strain D39 / NCTC 7466).